Consider the following 100-residue polypeptide: Urease subunit gamma (100 aa).

It belongs to the urease gamma subunit family. Heterotrimer of UreA (gamma), UreB (beta) and UreC (alpha) subunits. Three heterotrimers associate to form the active enzyme.

It localises to the cytoplasm. It catalyses the reaction urea + 2 H2O + H(+) = hydrogencarbonate + 2 NH4(+). It participates in nitrogen metabolism; urea degradation; CO(2) and NH(3) from urea (urease route): step 1/1. The polypeptide is Urease subunit gamma (Citrobacter koseri (strain ATCC BAA-895 / CDC 4225-83 / SGSC4696)).